The primary structure comprises 1058 residues: MNDTKTPGDKTLHPAPGKTLTLKRPVEQGTVRQSFSHGRSKSVVVEKVKRRVFAPGEAGAPSGTPAAAPAATPAPAAAAPRPATPAPAAPRPAAPATPAQPAAEAKAPAPAPTPAPAAPAAPVAEAPKVEAPAPVAAKPEAAPAAPVAEAPKVEVPAPAPAPAEPVAAQPAAPVAAAPAAPARAPEAPRPAVSAPRPAATTSSGSSSSSSRPAAGGAQRSGAAPQRPGTSGGPGRPGAPASGQRSGGPGSDRRGGPGGQNRPGQNRQGGSGVVLRTLTEEERNARASALADARVREVEERRMAEERRIAEEEARRRAERERAERAEREAAEARKREEESRRALEDESKRRAEQEARKRFGEETGRSGGASAPSTSTARPLTPRPAGTTTTTGAPAAGEEEDRRPRRGGGVPPRPAAPVKLPKSAGGEKHRGRLTVVTAQSGEEERQRSVASFRRRTQRMTGHRGMQESKEKIVREVVLPETITIQELANRMSERAVDVIRMLMKQGQMVKITDVIDADTAELIAADLGHTVRRVSESDVEEGLFDSADAPEDLLPRPPVVTIMGHVDHGKTSLLDSLRKANVVSGEAGGITQHIGAYQVTSPLGGKITFIDTPGHAAFTAMRARGAKVTDIVVLVVAADDGVMPQTVEAINHARAAKVPLIVAINKIDKPDAKPERVRSELLQYEVQVESMGGDTLEVEVSATKQINLDKLLEAISLQSEVLDLKANPDRPAEGTVVEAKLDRGRGPVATVLVQRGTLRVGDIVVAGAEFGRVRALITDTGATTTEAGPSVPVEVLGFNGTPEAGDRLAVVESEARAREITEYRQRQKREKAAARSAVVRGSLEQMMSQVRSTGRKEFPLIIKGDVSGSVEAIIGALEKLGNDEVQARIIHSGAGGINESDVTLAETSGAAIIGFNVRANKEARDSAERAGIEIRYYNIIYDLVDDVKKAMSGLLAPITRETMLGNALILEIFNVSKVGKVAGCRVTDGTVERGQHVRLIRDNVVIHEGKLATLNRFKDAVKEVLAGQECGMSFENYQDMRAGDVIECYRVEVVQRSL.

Residues 1–12 (MNDTKTPGDKTL) show a composition bias toward basic and acidic residues. Positions 1–468 (MNDTKTPGDK…MTGHRGMQES (468 aa)) are disordered. Positions 54-81 (APGEAGAPSGTPAAAPAATPAPAAAAPR) are enriched in low complexity. Residues 82–95 (PATPAPAAPRPAAP) show a composition bias toward pro residues. Low complexity predominate over residues 96 to 108 (ATPAQPAAEAKAP). The segment covering 109–119 (APAPTPAPAAP) has biased composition (pro residues). Composition is skewed to low complexity over residues 120–156 (AAPVAEAPKVEAPAPVAAKPEAAPAAPVAEAPKVEVP) and 164–228 (EPVA…QRPG). The span at 244–271 (RSGGPGSDRRGGPGGQNRPGQNRQGGSG) shows a compositional bias: gly residues. Basic and acidic residues predominate over residues 292–364 (ARVREVEERR…ARKRFGEETG (73 aa)). The span at 368-396 (GASAPSTSTARPLTPRPAGTTTTTGAPAA) shows a compositional bias: low complexity. A compositionally biased stretch (basic residues) spans 452–461 (FRRRTQRMTG). One can recognise a tr-type G domain in the interval 555-725 (PRPPVVTIMG…SLQSEVLDLK (171 aa)). The tract at residues 564–571 (GHVDHGKT) is G1. Residue 564–571 (GHVDHGKT) coordinates GTP. Positions 589–593 (GITQH) are G2. The segment at 611–614 (DTPG) is G3. GTP-binding positions include 611–615 (DTPGH) and 665–668 (NKID). Residues 665–668 (NKID) are G4. Residues 701-703 (SAT) are G5.

The protein belongs to the TRAFAC class translation factor GTPase superfamily. Classic translation factor GTPase family. IF-2 subfamily.

It is found in the cytoplasm. In terms of biological role, one of the essential components for the initiation of protein synthesis. Protects formylmethionyl-tRNA from spontaneous hydrolysis and promotes its binding to the 30S ribosomal subunits. Also involved in the hydrolysis of GTP during the formation of the 70S ribosomal complex. This Azorhizobium caulinodans (strain ATCC 43989 / DSM 5975 / JCM 20966 / LMG 6465 / NBRC 14845 / NCIMB 13405 / ORS 571) protein is Translation initiation factor IF-2.